Reading from the N-terminus, the 178-residue chain is Inorganic pyrophosphatase (178 aa).

Residues Lys30, Arg44, and Tyr56 each coordinate substrate. Mg(2+)-binding residues include Asp66, Asp71, and Asp103. Tyr142 lines the substrate pocket.

This sequence belongs to the PPase family. Homohexamer. Mg(2+) serves as cofactor.

The protein localises to the cytoplasm. The catalysed reaction is diphosphate + H2O = 2 phosphate + H(+). Catalyzes the hydrolysis of inorganic pyrophosphate (PPi) forming two phosphate ions. This Xanthomonas axonopodis pv. citri (strain 306) protein is Inorganic pyrophosphatase.